The sequence spans 661 residues: Solute carrier organic anion transporter family member 1A4 (661 aa).

Over 1–20 the chain is Cytoplasmic; it reads MGKSEKRVATHGVRCFAKIK. The chain crosses the membrane as a helical span at residues 21–40; it reads MFLLALTCAYVSKSLSGTYM. Residues 41–59 lie on the Extracellular side of the membrane; it reads NSMLTQIERQFGIPTSIVG. A helical transmembrane segment spans residues 60-80; sequence LINGSFEIGNLLLIIFVSYFG. At 81–86 the chain is on the cytoplasmic side; that stretch reads TKLHRP. The chain crosses the membrane as a helical span at residues 87 to 111; sequence IMIGVGCAVMGLGCFLISLPHFLMG. The Extracellular segment spans residues 112-154; sequence QYEYETILPTSNVSSNSFFCVENRSQTLNPTQDPSECVKEMKS. 2 N-linked (GlcNAc...) asparagine glycosylation sites follow: Asn-123 and Asn-134. Residues 155–183 form a helical membrane-spanning segment; the sequence is LMWIYVLVGNIIRGIGETPIMPLGISYIE. The Cytoplasmic segment spans residues 184-202; sequence DFAKSENSPLYIGILETGM. The chain crosses the membrane as a helical span at residues 203-223; sequence TIGPLIGLLLASSCANIYVDI. Topologically, residues 224 to 241 are extracellular; the sequence is ESVNTDDLTITPTDTRWV. The helical transmembrane segment at 242-266 threads the bilayer; the sequence is GAWWIGFLVCAGVNILTSFPFFFFP. The Cytoplasmic portion of the chain corresponds to 267 to 310; it reads KTLPKEGLQENVDGTENAKEKKHRKKAKEEKRGITKDFFVFMKS. Residues 311 to 332 traverse the membrane as a helical segment; it reads LSCNPIYMLFILISVLQFNAFI. Topologically, residues 333 to 352 are extracellular; it reads NSFTFMPKYLEQQYGKSTAE. The helical transmembrane segment at 353–376 threads the bilayer; the sequence is VVFLMGLYMLPPICLGYLIGGLIM. The Cytoplasmic segment spans residues 377–380; that stretch reads KKFK. A helical membrane pass occupies residues 381–404; sequence VTVKKAAHLAFWLCLSEYLLSFLS. Over 405-512 the chain is Extracellular; the sequence is YVMTCDNFPV…PDCANKLQYF (108 aa). One can recognise a Kazal-like domain in the interval 432-487; sequence NKVLADCNTRCNCSTNTWDPVCGDNGLAYMSACLAGCEKSVGTGTNMVFQNCSCIQ. Disulfide bonds link Cys-438–Cys-468, Cys-444–Cys-464, and Cys-453–Cys-485. N-linked (GlcNAc...) asparagine glycosylation is present at Asn-443. Residues Asn-482 and Asn-491 are each glycosylated (N-linked (GlcNAc...) asparagine). The helical transmembrane segment at 513-535 threads the bilayer; that stretch reads LIIAIFGCFIYSLAGIPGYMVLL. Topologically, residues 536–544 are cytoplasmic; that stretch reads RCIKSEEKS. Residues 545–570 traverse the membrane as a helical segment; the sequence is LGVGLHAFCIRILAGIPAPIYFGALI. The Extracellular segment spans residues 571–604; that stretch reads DRTCLHWGTLKCGEPGACRMYDINSFRRLYLGLP. Residues 605 to 622 form a helical membrane-spanning segment; it reads AALRGASFVPAFFILRLT. At 623–661 the chain is on the cytoplasmic side; the sequence is RTFQFPGDIESSKTDHAEMKLTLKESECTEVLRSKVTED. Phosphoserine occurs at positions 633 and 634.

This sequence belongs to the organo anion transporter (TC 2.A.60) family. In terms of tissue distribution, highly expressed in brain, liver, and kidney but not expressed in heart, spleen, lung, skeletal muscle, and testis.

It is found in the cell membrane. The catalysed reaction is estrone 3-sulfate(out) = estrone 3-sulfate(in). It catalyses the reaction taurocholate(out) = taurocholate(in). It carries out the reaction prostaglandin E2(out) = prostaglandin E2(in). The enzyme catalyses L-thyroxine(out) = L-thyroxine(in). Mediates the Na(+)-independent transport of organic anions such as taurocholate, cholate, 17-beta-glucuronosyl estradiol, prostaglandin E2, estrone 3-sulfate, L-thyroxine (T4), the cardiac glycosides ouabain and digoxin and thyroid hormones. May play an especially important role in the brain accumulation and toxicity of digoxin and in the hepatobiliary and renal excretion of cardiac glycosides. Shows a pH-sensitive substrate specificity which may be ascribed to the protonation state of the binding site and leads to a stimulation of substrate transport in an acidic microenvironment. Hydrogencarbonate/HCO3(-) acts as the probable counteranion that exchanges for organic anions. This Rattus norvegicus (Rat) protein is Solute carrier organic anion transporter family member 1A4 (Slco1a4).